We begin with the raw amino-acid sequence, 210 residues long: Cytochrome c4 (210 aa).

A signal peptide spans 1 to 20; the sequence is MNKVLVSLLLTLGITGMAHA. Cysteine 34, cysteine 37, histidine 38, methionine 86, cysteine 139, cysteine 142, histidine 143, and methionine 187 together coordinate heme c.

Binds 2 heme c groups covalently per subunit.

The protein resides in the periplasm. Diheme, high potential cytochrome c believed to be an intermediate electron donor to terminal oxidation systems. This chain is Cytochrome c4 (cc4), found in Stutzerimonas stutzeri (Pseudomonas stutzeri).